A 245-amino-acid chain; its full sequence is Orotidine 5'-phosphate decarboxylase (245 aa).

Substrate contacts are provided by residues D22, K44, 71–80 (DLKFHDIPNT), T131, R192, Q201, G221, and R222. K73 serves as the catalytic Proton donor.

It belongs to the OMP decarboxylase family. Type 1 subfamily. As to quaternary structure, homodimer.

It catalyses the reaction orotidine 5'-phosphate + H(+) = UMP + CO2. Its pathway is pyrimidine metabolism; UMP biosynthesis via de novo pathway; UMP from orotate: step 2/2. In terms of biological role, catalyzes the decarboxylation of orotidine 5'-monophosphate (OMP) to uridine 5'-monophosphate (UMP). This is Orotidine 5'-phosphate decarboxylase from Shigella flexneri.